Reading from the N-terminus, the 316-residue chain is tRNA dimethylallyltransferase (316 aa).

17-24 (GPTASGKT) is an ATP binding site. Residue 19 to 24 (TASGKT) coordinates substrate. Interaction with substrate tRNA regions lie at residues 42 to 45 (DSAL), 166 to 170 (QRLSR), and 247 to 252 (RCVGYR).

Belongs to the IPP transferase family. In terms of assembly, monomer. Requires Mg(2+) as cofactor.

The enzyme catalyses adenosine(37) in tRNA + dimethylallyl diphosphate = N(6)-dimethylallyladenosine(37) in tRNA + diphosphate. Catalyzes the transfer of a dimethylallyl group onto the adenine at position 37 in tRNAs that read codons beginning with uridine, leading to the formation of N6-(dimethylallyl)adenosine (i(6)A). This Erwinia tasmaniensis (strain DSM 17950 / CFBP 7177 / CIP 109463 / NCPPB 4357 / Et1/99) protein is tRNA dimethylallyltransferase.